A 121-amino-acid polypeptide reads, in one-letter code: Conopressin-conophysin (121 aa).

The signal sequence occupies residues 1–20; that stretch reads MGRLTMALCWLLLLLLTTQA. Cysteines 21 and 26 form a disulfide. Proline 27 is modified (4-hydroxyproline; partial; in Conopressin-ba1c). At glycine 29 the chain carries Glycine amide. Cystine bridges form between cysteine 43–cysteine 83, cysteine 46–cysteine 57, cysteine 51–cysteine 73, cysteine 58–cysteine 63, cysteine 90–cysteine 108, cysteine 102–cysteine 120, and cysteine 109–cysteine 114.

Belongs to the vasopressin/oxytocin family. In terms of tissue distribution, expressed by the venom duct.

The protein resides in the secreted. This chain is Conopressin-conophysin, found in Conus bayani (Bayan's cone).